Consider the following 147-residue polypeptide: MSAPMIGMVVLVVVLGLAVLALSYRLWKLRQGGTAGIMRDIPAVGGHGWRHGVIRYRGGEAAFYRLSSLRLWPDRRLSRRGVEIISRRAPRGDEFDIMTDEIVVVELCDSTQDRRVGYEIALDRGALTAFLSWLESRPSPRARRRSM.

A helical membrane pass occupies residues 3-23 (APMIGMVVLVVVLGLAVLALS).

The protein to M.leprae ML1147.

The protein localises to the membrane. This is an uncharacterized protein from Mycobacterium tuberculosis (strain CDC 1551 / Oshkosh).